Here is a 294-residue protein sequence, read N- to C-terminus: Probable 2-(5''-triphosphoribosyl)-3'-dephosphocoenzyme-A synthase (294 aa).

It belongs to the CitG/MdcB family.

The catalysed reaction is 3'-dephospho-CoA + ATP = 2'-(5''-triphospho-alpha-D-ribosyl)-3'-dephospho-CoA + adenine. The sequence is that of Probable 2-(5''-triphosphoribosyl)-3'-dephosphocoenzyme-A synthase from Streptococcus pyogenes serotype M18 (strain MGAS8232).